A 483-amino-acid chain; its full sequence is ATP synthase subunit beta, chloroplastic (483 aa).

163–170 contributes to the ATP binding site; sequence GGAGVGKT.

It belongs to the ATPase alpha/beta chains family. In terms of assembly, F-type ATPases have 2 components, CF(1) - the catalytic core - and CF(0) - the membrane proton channel. CF(1) has five subunits: alpha(3), beta(3), gamma(1), delta(1), epsilon(1). CF(0) has four main subunits: a(1), b(1), b'(1) and c(9-12).

The protein localises to the plastid. It localises to the chloroplast thylakoid membrane. The enzyme catalyses ATP + H2O + 4 H(+)(in) = ADP + phosphate + 5 H(+)(out). In terms of biological role, produces ATP from ADP in the presence of a proton gradient across the membrane. The catalytic sites are hosted primarily by the beta subunits. This is ATP synthase subunit beta, chloroplastic from Ostreococcus tauri.